A 294-amino-acid chain; its full sequence is UDP-3-O-acyl-N-acetylglucosamine deacetylase (294 aa).

H75, H232, and D236 together coordinate Zn(2+). The active-site Proton donor is H259.

Belongs to the LpxC family. Zn(2+) serves as cofactor.

It catalyses the reaction a UDP-3-O-[(3R)-3-hydroxyacyl]-N-acetyl-alpha-D-glucosamine + H2O = a UDP-3-O-[(3R)-3-hydroxyacyl]-alpha-D-glucosamine + acetate. Its pathway is glycolipid biosynthesis; lipid IV(A) biosynthesis; lipid IV(A) from (3R)-3-hydroxytetradecanoyl-[acyl-carrier-protein] and UDP-N-acetyl-alpha-D-glucosamine: step 2/6. In terms of biological role, catalyzes the hydrolysis of UDP-3-O-myristoyl-N-acetylglucosamine to form UDP-3-O-myristoylglucosamine and acetate, the committed step in lipid A biosynthesis. The protein is UDP-3-O-acyl-N-acetylglucosamine deacetylase of Campylobacter jejuni (strain RM1221).